Here is a 177-residue protein sequence, read N- to C-terminus: Nucleoside triphosphate/diphosphate phosphatase (177 aa).

Catalysis depends on arginine 23, which acts as the Proton donor. Mg(2+) is bound by residues asparagine 87, aspartate 103, aspartate 105, aspartate 107, aspartate 120, and glutamate 123.

Belongs to the Ntdp family. It depends on Mg(2+) as a cofactor.

The catalysed reaction is a ribonucleoside 5'-triphosphate + H2O = a ribonucleoside 5'-diphosphate + phosphate + H(+). It catalyses the reaction a ribonucleoside 5'-diphosphate + H2O = a ribonucleoside 5'-phosphate + phosphate + H(+). Functionally, has nucleoside phosphatase activity towards nucleoside triphosphates and nucleoside diphosphates. This Streptococcus pyogenes serotype M3 (strain ATCC BAA-595 / MGAS315) protein is Nucleoside triphosphate/diphosphate phosphatase.